Reading from the N-terminus, the 880-residue chain is Probable receptor-like protein kinase At5g38990 (880 aa).

Positions 1-21 are cleaved as a signal peptide; the sequence is MICHVLVIFTILVSAVVDATA. The Extracellular portion of the chain corresponds to 22–440; the sequence is SYEPTDVFLI…GKGKSSHVLP (419 aa). Asparagine 46, asparagine 136, asparagine 158, asparagine 210, asparagine 256, asparagine 263, asparagine 297, and asparagine 324 each carry an N-linked (GlcNAc...) asparagine glycan. Residues 441-461 traverse the membrane as a helical segment; sequence IIIAVVGSAVALAFFVLVVVL. At 462–880 the chain is on the cytoplasmic side; that stretch reads VVMKRKKKSN…FSEINEPKAR (419 aa). The interval 471-505 is disordered; sequence NESSVDTTNKPSTNSSWGPLLHGTGSTNTKSASSL. Polar residues-rich tracts occupy residues 472–487 and 494–505; these read ESSVDTTNKPSTNSSW and TGSTNTKSASSL. Positions 525–810 constitute a Protein kinase domain; it reads FEEKLIIGVG…EFALQLHETA (286 aa). ATP-binding positions include 531–539 and lysine 554; that span reads IGVGGFGSV. The active-site Proton acceptor is aspartate 653. The tract at residues 820–846 is disordered; the sequence is LDLMPSGEVGTTTDGEDDLFSRTTGHV.

It belongs to the protein kinase superfamily. Ser/Thr protein kinase family.

The protein resides in the membrane. The sequence is that of Probable receptor-like protein kinase At5g38990 from Arabidopsis thaliana (Mouse-ear cress).